A 72-amino-acid chain; its full sequence is Translation initiation factor IF-1 (72 aa).

Positions 1–72 (MAKEDSIEMQ…SKGRIVFRSR (72 aa)) constitute an S1-like domain.

It belongs to the IF-1 family. Component of the 30S ribosomal translation pre-initiation complex which assembles on the 30S ribosome in the order IF-2 and IF-3, IF-1 and N-formylmethionyl-tRNA(fMet); mRNA recruitment can occur at any time during PIC assembly.

The protein localises to the cytoplasm. Functionally, one of the essential components for the initiation of protein synthesis. Stabilizes the binding of IF-2 and IF-3 on the 30S subunit to which N-formylmethionyl-tRNA(fMet) subsequently binds. Helps modulate mRNA selection, yielding the 30S pre-initiation complex (PIC). Upon addition of the 50S ribosomal subunit IF-1, IF-2 and IF-3 are released leaving the mature 70S translation initiation complex. This Aeromonas hydrophila subsp. hydrophila (strain ATCC 7966 / DSM 30187 / BCRC 13018 / CCUG 14551 / JCM 1027 / KCTC 2358 / NCIMB 9240 / NCTC 8049) protein is Translation initiation factor IF-1.